A 514-amino-acid chain; its full sequence is Deoxynucleoside triphosphate triphosphohydrolase SAMHD1 homolog (514 aa).

Positions 1 to 24 (MNNTFKYVNEDVSGTEGEESDYDP) are disordered. Residue lysine 80 participates in GTP binding. Residue asparagine 83 participates in a 2'-deoxyribonucleoside 5'-triphosphate binding. A GTP-binding site is contributed by 101–109 (DTEQFQRLR). Substrate-binding residues include glutamine 113 and arginine 128. The HD domain occupies 128-259 (RFEHSIGVSH…SVDVDKFDYL (132 aa)). Positions 131, 170, and 171 each coordinate Zn(2+). Histidine 174 contacts substrate. Histidine 196 is a catalytic residue. Substrate contacts are provided by residues 252–258 (DVDKFDY), tyrosine 258, and aspartate 262. Position 254 (aspartate 254) interacts with Zn(2+). A 2'-deoxyribonucleoside 5'-triphosphate is bound by residues arginine 276, 291-293 (LSK), and asparagine 297. Substrate contacts are provided by residues arginine 305 and 309 to 314 (HKLVYT). Residues histidine 315 and lysine 316 each coordinate a 2'-deoxyribonucleoside 5'-triphosphate. Arginine 380 and lysine 384 together coordinate GTP.

This sequence belongs to the SAMHD1 family. In terms of assembly, homodimer; in absence of GTP and dNTP. Homotetramer; in GTP- and dNTP-bound form. It depends on Zn(2+) as a cofactor.

The enzyme catalyses a 2'-deoxyribonucleoside 5'-triphosphate + H2O = a 2'-deoxyribonucleoside + triphosphate + H(+). Allosterically activated and regulated via the combined actions of GTP and dNTPs (dATP, dGTP, dTTP and dCTP): Allosteric site 1 binds GTP, while allosteric site 2 binds dNTP. Allosteric activation promotes the formation of highly active homotetramers. Functionally, has deoxynucleoside triphosphate (dNTPase) activity. The sequence is that of Deoxynucleoside triphosphate triphosphohydrolase SAMHD1 homolog from Dictyostelium discoideum (Social amoeba).